A 549-amino-acid chain; its full sequence is CTP synthase (549 aa).

Residues 1–272 (MPPKSTTTKH…DAYVVRKLDL (272 aa)) are amidoligase domain. CTP is bound at residue S19. S19 serves as a coordination point for UTP. ATP contacts are provided by residues 20 to 25 (SLGKGL) and D77. Mg(2+)-binding residues include D77 and E146. CTP-binding positions include 153–155 (DIE), 193–198 (KTKPTQ), and K229. Residues 193-198 (KTKPTQ) and K229 each bind UTP. In terms of domain architecture, Glutamine amidotransferase type-1 spans 297-548 (NLALVGKYID…VKAAVERKTG (252 aa)). L-glutamine is bound at residue G360. The Nucleophile; for glutamine hydrolysis role is filled by C387. L-glutamine is bound by residues 388–391 (LGLQ), E411, and R473. Catalysis depends on residues H521 and E523.

It belongs to the CTP synthase family. Homotetramer.

It carries out the reaction UTP + L-glutamine + ATP + H2O = CTP + L-glutamate + ADP + phosphate + 2 H(+). The catalysed reaction is L-glutamine + H2O = L-glutamate + NH4(+). It catalyses the reaction UTP + NH4(+) + ATP = CTP + ADP + phosphate + 2 H(+). Its pathway is pyrimidine metabolism; CTP biosynthesis via de novo pathway; CTP from UDP: step 2/2. Allosterically activated by GTP, when glutamine is the substrate; GTP has no effect on the reaction when ammonia is the substrate. The allosteric effector GTP functions by stabilizing the protein conformation that binds the tetrahedral intermediate(s) formed during glutamine hydrolysis. Inhibited by the product CTP, via allosteric rather than competitive inhibition. Functionally, catalyzes the ATP-dependent amination of UTP to CTP with either L-glutamine or ammonia as the source of nitrogen. Regulates intracellular CTP levels through interactions with the four ribonucleotide triphosphates. The chain is CTP synthase from Streptomyces avermitilis (strain ATCC 31267 / DSM 46492 / JCM 5070 / NBRC 14893 / NCIMB 12804 / NRRL 8165 / MA-4680).